A 1017-amino-acid chain; its full sequence is Disease resistance protein RML1B (1017 aa).

In terms of domain architecture, TIR spans 12–176 (YKFNVFASFH…KIARDVLDKL (165 aa)). The active site involves E87. The 257-residue stretch at 191–447 (EAHLREIKSL…HIAIFFNKED (257 aa)) folds into the NB-ARC domain. LRR repeat units lie at residues 539–562 (ISRISEVSIRKKAFKRMPNLQFLK), 583–605 (PCLLRLLDWKAYPSKSLPPTFNP), 606–628 (EHLVELNMHSSQLEYLWQGTQPL), 629–652 (KNLKKMDLSQSKNLKQLPDLSNAT), 654–675 (LEYLYLMGCESLIEIPSSISHL), 676–698 (HKLEMLATVGCINLEVIPAHMNL), 699–724 (ESLQTVYLGGCSRLRNIPVMSTNIRY), 738–760 (CPGLKTLDVSGSRNFKGLLTHLP), 761–782 (TSLTTLNLCYTDIERIPDCFKS), and 784–809 (HQLKGVNLRGCRRLASLPELPRSLLT).

The enzyme catalyses NAD(+) + H2O = ADP-D-ribose + nicotinamide + H(+). In terms of biological role, TIR-NB-LRR receptor-like protein that confers resistance to the pathogen Leptosphaeria maculans (blackleg disease). The sequence is that of Disease resistance protein RML1B from Arabidopsis thaliana (Mouse-ear cress).